The following is a 103-amino-acid chain: Acylphosphatase-2 (103 aa).

Residues 13-103 form the Acylphosphatase-like domain; that stretch reads SVDYEVFGRV…LQYNGFSTRY (91 aa). Active-site residues include R28 and N46.

Belongs to the acylphosphatase family.

The enzyme catalyses an acyl phosphate + H2O = a carboxylate + phosphate + H(+). This Xenopus tropicalis (Western clawed frog) protein is Acylphosphatase-2 (acyp2).